A 217-amino-acid chain; its full sequence is Uracil-DNA glycosylase (217 aa).

Asp62 functions as the Proton acceptor in the catalytic mechanism.

This sequence belongs to the uracil-DNA glycosylase (UDG) superfamily. UNG family.

It is found in the cytoplasm. It carries out the reaction Hydrolyzes single-stranded DNA or mismatched double-stranded DNA and polynucleotides, releasing free uracil.. Functionally, excises uracil residues from the DNA which can arise as a result of misincorporation of dUMP residues by DNA polymerase or due to deamination of cytosine. The sequence is that of Uracil-DNA glycosylase from Streptococcus equi subsp. zooepidemicus (strain H70).